The following is a 138-amino-acid chain: Large ribosomal subunit protein bL19 (138 aa).

This sequence belongs to the bacterial ribosomal protein bL19 family.

Its function is as follows. This protein is located at the 30S-50S ribosomal subunit interface and may play a role in the structure and function of the aminoacyl-tRNA binding site. In Rickettsia rickettsii (strain Iowa), this protein is Large ribosomal subunit protein bL19.